Here is a 513-residue protein sequence, read N- to C-terminus: MQQLNPSEISEIIKARIDNLSVTTEAQNEGTVVSVTDGIIRIHGLAEVMYGEMIEFEGGVYGIALNLERDSVGAVILGDYQGVAEGQTCKCTGRILEVPVGPELQGRVVDALGNPIDGKGPIDAKATDAIEKIAPGVIARQSVDQPVQIGLKAVDTMVPIGRGQRELIIGDRQTGKTAIAVDAIINQKGTGIKCIYVAIGQKASSIASVVRKLEEHGAMDHTIVVAATASDPASMQFLAPFAGCTMGEYYRDRGEDCLIIYDDLTKQAWAYRQISLLLRRPPGREAYPGDVFYLHSRLLERAARVNAAHVEKYTNGEVKGQTGSLTALPIIETQAGDVSAFVPTNVISITDGQIFLESDLFNAGIRPAMNAGISVSRVGGSAQTKVIKKLSGGIRTALAQYRELAAFAQFASDLDEATKAQLNHGQRVTELMKQKQYSPQSVAEMAVVVYAANEGFLEDVEVAKMGAFESSLLSYMNSSHAELMAEMNTGAYSDDIAGKLKGALENFKATQTW.

Glycine 170 to threonine 177 lines the ATP pocket.

It belongs to the ATPase alpha/beta chains family. F-type ATPases have 2 components, CF(1) - the catalytic core - and CF(0) - the membrane proton channel. CF(1) has five subunits: alpha(3), beta(3), gamma(1), delta(1), epsilon(1). CF(0) has three main subunits: a(1), b(2) and c(9-12). The alpha and beta chains form an alternating ring which encloses part of the gamma chain. CF(1) is attached to CF(0) by a central stalk formed by the gamma and epsilon chains, while a peripheral stalk is formed by the delta and b chains.

It localises to the cell inner membrane. It catalyses the reaction ATP + H2O + 4 H(+)(in) = ADP + phosphate + 5 H(+)(out). Its function is as follows. Produces ATP from ADP in the presence of a proton gradient across the membrane. The alpha chain is a regulatory subunit. The protein is ATP synthase subunit alpha of Teredinibacter turnerae (strain ATCC 39867 / T7901).